The sequence spans 129 residues: Putative redox protein FMP46, mitochondrial (129 aa).

The transit peptide at 1–21 (MSMFRTLQRQPRTISLFTHDL) directs the protein to the mitochondrion. Cys94 is a catalytic residue.

Belongs to the FMP46 family.

The protein resides in the mitochondrion. Functionally, putative mitochondrial redox protein which could be involved in the reduction of small toxic molecules. This Candida glabrata (strain ATCC 2001 / BCRC 20586 / JCM 3761 / NBRC 0622 / NRRL Y-65 / CBS 138) (Yeast) protein is Putative redox protein FMP46, mitochondrial (FMP46).